A 493-amino-acid chain; its full sequence is Probable polyol transporter 6 (493 aa).

The next 12 membrane-spanning stretches (helical) occupy residues 25 to 45 (SIVS…MVFI), 54 to 74 (VQIE…SLLA), 85 to 105 (YTIV…GWGP), 116 to 136 (TAGL…AEIA), 142 to 162 (GLLA…GYIV), 177 to 197 (LMLG…LKMP), 275 to 295 (VLLT…EAVL), 313 to 333 (LFLV…TATL), 343 to 363 (LLLT…FGLT), 372 to 392 (LAWA…FFSI), 414 to 434 (GASL…MSFL), and 444 to 464 (GAFF…FFLL).

This sequence belongs to the major facilitator superfamily. Sugar transporter (TC 2.A.1.1) family.

It localises to the membrane. In terms of biological role, plasma membrane sugar-proton symporter. The sequence is that of Probable polyol transporter 6 (PLT6) from Arabidopsis thaliana (Mouse-ear cress).